The sequence spans 193 residues: E3 ubiquitin-protein ligase RMA2 (193 aa).

An RING-type zinc finger spans residues 21 to 75 (CNICLDQVRDPVVTLCGHLFCWPCIHKWTYASNNSRQRVDQYDHKREPPKCPVCK). The helical; Anchor for type IV membrane protein transmembrane segment at 175-192 (LSRVYLFLLCFMFMCLFL) threads the bilayer.

In terms of assembly, interacts with ERABP1. Barely detected in roots and limited to the root tips. Expressed in leaf hydathodes and in siliques.

The protein localises to the endoplasmic reticulum membrane. It carries out the reaction S-ubiquitinyl-[E2 ubiquitin-conjugating enzyme]-L-cysteine + [acceptor protein]-L-lysine = [E2 ubiquitin-conjugating enzyme]-L-cysteine + N(6)-ubiquitinyl-[acceptor protein]-L-lysine.. It participates in protein modification; protein ubiquitination. Functionally, E3 ubiquitin-protein ligase that promotes the ubiquitination and proteasomal degradation of the auxin-binding protein ERABP1. The sequence is that of E3 ubiquitin-protein ligase RMA2 (RMA2) from Arabidopsis thaliana (Mouse-ear cress).